We begin with the raw amino-acid sequence, 1551 residues long: Pentafunctional AROM polypeptide 2 (1551 aa).

The interval 1 to 379 (MSIEKVSILG…YESKAHQIFK (379 aa)) is 3-dehydroquinate synthase. Residues 42-44 (DTN), 80-83 (ENHK), 111-113 (GGV), and Asp116 contribute to the NAD(+) site. Arg127 is a binding site for 7-phospho-2-dehydro-3-deoxy-D-arabino-heptonate. Residue 136-137 (TT) participates in NAD(+) binding. 7-phospho-2-dehydro-3-deoxy-D-arabino-heptonate contacts are provided by Asp143 and Lys149. Lys158 provides a ligand contact to NAD(+). Asn159 is a binding site for 7-phospho-2-dehydro-3-deoxy-D-arabino-heptonate. NAD(+) contacts are provided by residues 176-179 (FLQT) and Asn187. Glu191 is a Zn(2+) binding site. 7-phospho-2-dehydro-3-deoxy-D-arabino-heptonate contacts are provided by residues 191–194 (EVVK) and Lys243. The active-site Proton acceptor; for 3-dehydroquinate synthase activity is Glu253. Residues 257-261 (RNLLN) and His264 each bind 7-phospho-2-dehydro-3-deoxy-D-arabino-heptonate. His264 provides a ligand contact to Zn(2+). His268 acts as the Proton acceptor; for 3-dehydroquinate synthase activity in catalysis. 7-phospho-2-dehydro-3-deoxy-D-arabino-heptonate contacts are provided by His280 and Lys351. His280 is a binding site for Zn(2+). The tract at residues 392–835 (VHPFANRHPE…WDVLHSKFNA (444 aa)) is EPSP synthase. The segment at 854–1044 (DRSIVIIGMR…LPATRSTFVT (191 aa)) is shikimate kinase. 861 to 868 (GMRAAGKT) serves as a coordination point for ATP. The 3-dehydroquinase stretch occupies residues 1045–1258 (LTYPDLRKVP…IGVGQLSLKE (214 aa)). His1162 functions as the Proton acceptor; for 3-dehydroquinate dehydratase activity in the catalytic mechanism. Catalysis depends on Lys1191, which acts as the Schiff-base intermediate with substrate; for 3-dehydroquinate dehydratase activity. Residues 1271-1551 (EKEFWVVGFP…KVIHSAVLNE (281 aa)) form a shikimate dehydrogenase region.

It in the N-terminal section; belongs to the sugar phosphate cyclases superfamily. Dehydroquinate synthase family. The protein in the 2nd section; belongs to the EPSP synthase family. In the 3rd section; belongs to the shikimate kinase family. This sequence in the 4th section; belongs to the type-I 3-dehydroquinase family. It in the C-terminal section; belongs to the shikimate dehydrogenase family. Homodimer. It depends on Zn(2+) as a cofactor.

The protein localises to the cytoplasm. The catalysed reaction is 7-phospho-2-dehydro-3-deoxy-D-arabino-heptonate = 3-dehydroquinate + phosphate. It catalyses the reaction 3-dehydroquinate = 3-dehydroshikimate + H2O. It carries out the reaction shikimate + NADP(+) = 3-dehydroshikimate + NADPH + H(+). The enzyme catalyses shikimate + ATP = 3-phosphoshikimate + ADP + H(+). The catalysed reaction is 3-phosphoshikimate + phosphoenolpyruvate = 5-O-(1-carboxyvinyl)-3-phosphoshikimate + phosphate. The protein operates within metabolic intermediate biosynthesis; chorismate biosynthesis; chorismate from D-erythrose 4-phosphate and phosphoenolpyruvate: step 2/7. It functions in the pathway metabolic intermediate biosynthesis; chorismate biosynthesis; chorismate from D-erythrose 4-phosphate and phosphoenolpyruvate: step 3/7. Its pathway is metabolic intermediate biosynthesis; chorismate biosynthesis; chorismate from D-erythrose 4-phosphate and phosphoenolpyruvate: step 4/7. It participates in metabolic intermediate biosynthesis; chorismate biosynthesis; chorismate from D-erythrose 4-phosphate and phosphoenolpyruvate: step 5/7. The protein operates within metabolic intermediate biosynthesis; chorismate biosynthesis; chorismate from D-erythrose 4-phosphate and phosphoenolpyruvate: step 6/7. In terms of biological role, the AROM polypeptide catalyzes 5 consecutive enzymatic reactions in prechorismate polyaromatic amino acid biosynthesis. The protein is Pentafunctional AROM polypeptide 2 of Lodderomyces elongisporus (strain ATCC 11503 / CBS 2605 / JCM 1781 / NBRC 1676 / NRRL YB-4239) (Yeast).